An 869-amino-acid chain; its full sequence is Leucine--tRNA ligase (869 aa).

The 'HIGH' region signature appears at 42 to 52; sequence PYPSGNLHMGH. The 'KMSKS' region signature appears at 622–626; it reads KMSKS. Lys625 contributes to the ATP binding site.

It belongs to the class-I aminoacyl-tRNA synthetase family.

It is found in the cytoplasm. It catalyses the reaction tRNA(Leu) + L-leucine + ATP = L-leucyl-tRNA(Leu) + AMP + diphosphate. The polypeptide is Leucine--tRNA ligase (Synechocystis sp. (strain ATCC 27184 / PCC 6803 / Kazusa)).